We begin with the raw amino-acid sequence, 464 residues long: Histidine--tRNA ligase (464 aa).

This sequence belongs to the class-II aminoacyl-tRNA synthetase family. In terms of assembly, homodimer.

The protein localises to the cytoplasm. It carries out the reaction tRNA(His) + L-histidine + ATP = L-histidyl-tRNA(His) + AMP + diphosphate + H(+). This is Histidine--tRNA ligase from Stenotrophomonas maltophilia (strain K279a).